The sequence spans 190 residues: dCTP deaminase, dUMP-forming (190 aa).

DCTP is bound by residues 101-106 (KSSLGR), Asp119, 127-129 (TLE), Gln148, Tyr162, and Gln174. Glu129 acts as the Proton donor/acceptor in catalysis. The tract at residues 161-190 (PYGSSGVGSKYQGQRGPTPSRSYQNFIRST) is disordered. Over residues 171–190 (YQGQRGPTPSRSYQNFIRST) the composition is skewed to polar residues.

The protein belongs to the dCTP deaminase family. Homotrimer.

The enzyme catalyses dCTP + 2 H2O = dUMP + NH4(+) + diphosphate. The protein operates within pyrimidine metabolism; dUMP biosynthesis; dUMP from dCTP: step 1/1. Bifunctional enzyme that catalyzes both the deamination of dCTP to dUTP and the hydrolysis of dUTP to dUMP without releasing the toxic dUTP intermediate. The polypeptide is dCTP deaminase, dUMP-forming (Mycobacterium ulcerans (strain Agy99)).